Here is a 398-residue protein sequence, read N- to C-terminus: Argininosuccinate synthase (398 aa).

9 to 17 contributes to the ATP binding site; sequence AYSGGLDTS. L-citrulline is bound at residue tyrosine 85. Glycine 115 contacts ATP. L-aspartate-binding residues include threonine 117, asparagine 121, and aspartate 122. Asparagine 121 contacts L-citrulline. Arginine 125, serine 173, glutamate 258, and tyrosine 270 together coordinate L-citrulline.

Belongs to the argininosuccinate synthase family. Type 1 subfamily. As to quaternary structure, homotetramer.

It localises to the cytoplasm. It carries out the reaction L-citrulline + L-aspartate + ATP = 2-(N(omega)-L-arginino)succinate + AMP + diphosphate + H(+). The protein operates within amino-acid biosynthesis; L-arginine biosynthesis; L-arginine from L-ornithine and carbamoyl phosphate: step 2/3. The chain is Argininosuccinate synthase from Streptococcus pneumoniae (strain ATCC BAA-255 / R6).